The chain runs to 193 residues: Activity-regulated cytoskeleton associated protein 2 (193 aa).

The protein belongs to the ARC/ARG3.1 family. In terms of assembly, homooligomer; homooligomerizes into virion-like capsids.

The protein resides in the extracellular vesicle membrane. In terms of biological role, self-assembles into virion-like capsids that encapsulate RNAs and mediate intercellular RNA transfer. Arc2 protein is released from cells in extracellular vesicles that mediate the transfer of mRNA into neighboring cells. The chain is Activity-regulated cytoskeleton associated protein 2 from Drosophila melanogaster (Fruit fly).